The following is a 110-amino-acid chain: Flagellar hook-basal body complex protein FliE (110 aa).

It belongs to the FliE family.

It localises to the bacterial flagellum basal body. The polypeptide is Flagellar hook-basal body complex protein FliE (Ralstonia nicotianae (strain ATCC BAA-1114 / GMI1000) (Ralstonia solanacearum)).